Here is a 245-residue protein sequence, read N- to C-terminus: Orotidine 5'-phosphate decarboxylase (245 aa).

Substrate contacts are provided by residues Asp-22, Lys-44, 71–80 (DLKFHDIPNT), Thr-131, Arg-192, Gln-201, Gly-221, and Arg-222. The Proton donor role is filled by Lys-73.

The protein belongs to the OMP decarboxylase family. Type 1 subfamily. In terms of assembly, homodimer.

The enzyme catalyses orotidine 5'-phosphate + H(+) = UMP + CO2. It participates in pyrimidine metabolism; UMP biosynthesis via de novo pathway; UMP from orotate: step 2/2. Catalyzes the decarboxylation of orotidine 5'-monophosphate (OMP) to uridine 5'-monophosphate (UMP). This chain is Orotidine 5'-phosphate decarboxylase, found in Shigella boydii serotype 18 (strain CDC 3083-94 / BS512).